We begin with the raw amino-acid sequence, 587 residues long: MPKQLSFSNDSREALENGVNTVANAVKVTIGPKAKNVVIERKFGSPDIVRDGSTVAKEINLDNPISNLGAKLIEQVASKTKESAGDGTTTATILTQIMVQEGLKNIAAGASPIELKKGMEKGLDIVLEKLKSKSIKINGSDIQKVATVSAGGDEEIGSIISKAMDIVTSDGVITVEESQSLETELDITEGMSFDRGYSSPYFVTDQERQICELENPKILITDQKISTLTNLVPILEEIQKSSSPFLVLAEDIEGEALTTLVLNKNSGVLNVSAVRAPSFGERRKAALEDIAILTGARLISEDQSMKLEEVTINDLGKAKKITISKDKTTIVAFDDTKDLVKARVEKLKREVEITESEYDKDKINERIAKLAGGVALIKVGAATETEMKYKKLRIEDSLNATKAAIEEGVVSGGGQTLIEISEELSNLGKEKSVDLNTGIKIITKALLEPTKQIARNAGFNGDVVIADIKRLNKGFNANNGQYENLNQSGILDPTKVIRLALQDSVSIAAMILTTEVAVADIPEPEAPAPGGPGADPMGGMGGMGGMGGMGMPGMGGMGMPGMGGMGMPGMGGMGMPGMGGMGMPGMM.

ATP is bound by residues 29–32 (TIGP), 86–90 (DGTTT), Gly413, and Asp492.

Belongs to the chaperonin (HSP60) family. As to quaternary structure, forms a cylinder of 14 subunits composed of two heptameric rings stacked back-to-back. Interacts with the co-chaperonin GroES.

It is found in the cytoplasm. The catalysed reaction is ATP + H2O + a folded polypeptide = ADP + phosphate + an unfolded polypeptide.. Together with its co-chaperonin GroES, plays an essential role in assisting protein folding. The GroEL-GroES system forms a nano-cage that allows encapsulation of the non-native substrate proteins and provides a physical environment optimized to promote and accelerate protein folding. The sequence is that of Chaperonin GroEL 1 from Prochlorococcus marinus (strain MIT 9515).